Consider the following 117-residue polypeptide: Large ribosomal subunit protein bL20 (117 aa).

Belongs to the bacterial ribosomal protein bL20 family.

In terms of biological role, binds directly to 23S ribosomal RNA and is necessary for the in vitro assembly process of the 50S ribosomal subunit. It is not involved in the protein synthesizing functions of that subunit. The chain is Large ribosomal subunit protein bL20 from Magnetococcus marinus (strain ATCC BAA-1437 / JCM 17883 / MC-1).